The primary structure comprises 125 residues: Large ribosomal subunit protein bL12 (125 aa).

Belongs to the bacterial ribosomal protein bL12 family. Homodimer. Part of the ribosomal stalk of the 50S ribosomal subunit. Forms a multimeric L10(L12)X complex, where L10 forms an elongated spine to which 2 to 4 L12 dimers bind in a sequential fashion. Binds GTP-bound translation factors.

Its function is as follows. Forms part of the ribosomal stalk which helps the ribosome interact with GTP-bound translation factors. Is thus essential for accurate translation. This is Large ribosomal subunit protein bL12 from Parabacteroides distasonis (strain ATCC 8503 / DSM 20701 / CIP 104284 / JCM 5825 / NCTC 11152).